Here is a 797-residue protein sequence, read N- to C-terminus: Protocadherin-3 (797 aa).

A signal peptide spans 1–30 (METALAKIPQQRQVFFLTILSLLWKSSSEA). Topologically, residues 31-691 (IRYSMPEETE…DNYDVLTLYL (661 aa)) are extracellular. Cadherin domains are found at residues 35 to 133 (MPEE…SPEF), 138 to 242 (MLLT…SPQF), 247 to 346 (YKVQ…APEL), 351 to 450 (LTVL…APAF), and 455 to 560 (YTMF…APFV). Residues asparagine 169, asparagine 276, and asparagine 417 are each glycosylated (N-linked (GlcNAc...) asparagine). N-linked (GlcNAc...) asparagine glycosylation occurs at asparagine 566. The region spanning 567 to 670 (ASAPCTELLP…VVDGFSQPYL (104 aa)) is the Cadherin 6 domain. Residues 692–712 (VIALASVSSLFLLSVVLFVGV) form a helical membrane-spanning segment. At 713 to 797 (RLCRRAREAS…AVVHNSVGFY (85 aa)) the chain is on the cytoplasmic side.

In terms of tissue distribution, expressed in brain.

Its subcellular location is the cell membrane. Its function is as follows. Potential calcium-dependent cell-adhesion protein. May be involved in the establishment and maintenance of specific neuronal connections in the brain. The chain is Protocadherin-3 (Pcdh3) from Rattus norvegicus (Rat).